Reading from the N-terminus, the 81-residue chain is Conotoxin Cl9.6 (81 aa).

The first 20 residues, Met-1–Pro-20, serve as a signal peptide directing secretion. Positions Asp-21–Thr-40 are excised as a propeptide. Disulfide bonds link Cys-46–Cys-69, Cys-54–Cys-76, and Cys-60–Cys-78.

Expressed by the venom duct.

The protein resides in the secreted. The sequence is that of Conotoxin Cl9.6 from Californiconus californicus (California cone).